A 236-amino-acid polypeptide reads, in one-letter code: Purine nucleoside phosphorylase DeoD-type (236 aa).

Residue His-4 participates in a purine D-ribonucleoside binding. Residues Gly-20, Arg-24, Arg-43, and 87 to 90 (RVGT) contribute to the phosphate site. A purine D-ribonucleoside-binding positions include 179 to 181 (EME) and 203 to 204 (SD). Residue Asp-204 is the Proton donor of the active site.

It belongs to the PNP/UDP phosphorylase family. Homohexamer; trimer of homodimers.

The enzyme catalyses a purine D-ribonucleoside + phosphate = a purine nucleobase + alpha-D-ribose 1-phosphate. It catalyses the reaction a purine 2'-deoxy-D-ribonucleoside + phosphate = a purine nucleobase + 2-deoxy-alpha-D-ribose 1-phosphate. Its function is as follows. Catalyzes the reversible phosphorolytic breakdown of the N-glycosidic bond in the beta-(deoxy)ribonucleoside molecules, with the formation of the corresponding free purine bases and pentose-1-phosphate. The sequence is that of Purine nucleoside phosphorylase DeoD-type from Streptococcus pneumoniae (strain CGSP14).